A 454-amino-acid polypeptide reads, in one-letter code: B-cell lymphoma 3 protein (454 aa).

The interval 1 to 50 (MPRCPAGAMDEGPVDLRTRPKAAGLPGAALPLRKRPLRAPSPEPAAPRGA) is disordered. The span at 21-31 (KAAGLPGAALP) shows a compositional bias: low complexity. Residue serine 41 is modified to Phosphoserine. ANK repeat units follow at residues 134–163 (DGDTPLHIAVVQGNLPAVHRLVNLFQQGGR), 171–200 (LRQTPLHLAVITTLPSVVRLLVTAGASPMA), 204–235 (HGQTAAHLACEHRSPTCLRALLDSAAPGTLDL), 241–270 (DGLTALHVAVNTECQETVQLLLERGADIDA), 275–304 (SGRSPLIHAVENNSLSMVQLLLQHGANVNA), 308–337 (SGSSALHSASGRGLLPLVRTLVRSGADSSL), and 338–367 (KNCHNDTPLMVARSRRVIDILRGKATRPAS). A disordered region spans residues 360–454 (GKATRPASTS…VPPSPAPGGS (95 aa)). The span at 365 to 381 (PASTSQPDPSPDRSANT) shows a compositional bias: polar residues. Serine 374 is modified (phosphoserine). Over residues 382-404 (SPESSSRLSSNGLLSASPSSSPS) the composition is skewed to low complexity. Serine 402 and serine 406 each carry phosphoserine; by GSK3. A compositionally biased stretch (pro residues) spans 405–418 (QSPPRDPPGFPMAP). A compositionally biased stretch (low complexity) spans 432-442 (LPFAGVLRGPG). Pro residues predominate over residues 443-454 (RPVPPSPAPGGS).

Component of a complex consisting of the NF-kappa-B p52-p52 homodimer and BCL3. Component of a complex consisting of the NF-kappa-B p50-p50 homodimer and BCL3. Interacts with N4BP2, COPS5 and PIR. Interacts with CYLD. Polyubiquitinated. Ubiquitination via 'Lys-63'-linked ubiquitin chains is required for nuclear accumulation. Deubiquitinated by CYLD, which acts on 'Lys-63'-linked ubiquitin chains. Deubiquitination by CYLD prevents nuclear accumulation. In terms of processing, activated by phosphorylation.

The protein resides in the nucleus. Its subcellular location is the cytoplasm. The protein localises to the perinuclear region. In terms of biological role, contributes to the regulation of transcriptional activation of NF-kappa-B target genes. In the cytoplasm, inhibits the nuclear translocation of the NF-kappa-B p50 subunit. In the nucleus, acts as transcriptional activator that promotes transcription of NF-kappa-B target genes. Contributes to the regulation of cell proliferation. The protein is B-cell lymphoma 3 protein (BCL3) of Homo sapiens (Human).